Here is a 104-residue protein sequence, read N- to C-terminus: ATP-dependent Clp protease adapter protein ClpS (104 aa).

This sequence belongs to the ClpS family. As to quaternary structure, binds to the N-terminal domain of the chaperone ClpA.

Functionally, involved in the modulation of the specificity of the ClpAP-mediated ATP-dependent protein degradation. The polypeptide is ATP-dependent Clp protease adapter protein ClpS (Burkholderia ambifaria (strain MC40-6)).